The primary structure comprises 391 residues: Ectodysplasin-A (391 aa).

Topologically, residues 1–41 are cytoplasmic; it reads MGYPEVERRELLPAAAPRERGSQGCGCGGAPARAGEGNSCL. The helical; Signal-anchor for type II membrane protein transmembrane segment at 42 to 62 threads the bilayer; sequence LFLGFFGLSLALHLLTLCCYL. Residues 63 to 391 lie on the Extracellular side of the membrane; that stretch reads ELRSELRRER…AIRLGEAPAS (329 aa). Disordered stretches follow at residues 73–127 and 146–245; these read GAES…HSDS and YSEE…GTRE. Low complexity predominate over residues 86–101; sequence TSGTLSSLGGLDPDSP. Residues 102–113 are compositionally biased toward polar residues; it reads ITSHLGQPSPKQ. Residues 180-229 form the Collagen-like domain; the sequence is GPPGPNGPPGPPGPPGPQGPPGIPGIPGIPGTTVMGPPGPPGPPGPQGPP. 2 stretches are compositionally biased toward pro residues: residues 181–203 and 216–228; these read PPGP…PGIP and PPGP…PQGP. Positions 249-385 constitute a THD domain; sequence AVVHLQGQGS…HTTFFGAIRL (137 aa). Asparagine 313 is a glycosylation site (N-linked (GlcNAc...) asparagine). Cysteine 332 and cysteine 346 are disulfide-bonded. An N-linked (GlcNAc...) asparagine glycan is attached at asparagine 372.

It belongs to the tumor necrosis factor family. Homotrimer. The homotrimers may then dimerize and form higher-order oligomers. N-glycosylated. Post-translationally, processing by furin produces a secreted form. In terms of tissue distribution, not abundant; expressed in specific cell types of ectodermal (but not mesodermal) origin of keratinocytes, hair follicles, sweat glands. Also in adult heart, liver, muscle, pancreas, prostate, fetal liver, uterus, small intestine and umbilical cord.

Its subcellular location is the cell membrane. The protein localises to the secreted. In terms of biological role, cytokine which is involved in epithelial-mesenchymal signaling during morphogenesis of ectodermal organs. Functions as a ligand activating the DEATH-domain containing receptors EDAR and EDA2R. May also play a role in cell adhesion. Binds only to the receptor EDAR, while isoform 3 binds exclusively to the receptor EDA2R. Its function is as follows. Binds only to the receptor EDA2R. In Homo sapiens (Human), this protein is Ectodysplasin-A (EDA).